A 238-amino-acid chain; its full sequence is MTPHINAPAGAFADVVLMPGDPLRAKYIAETFLDQPELVTDVRNMLGYTGSYKGRRISVMGHGMGIPSCSIYSKELITEYGVKKIIRVGSCGAVRQDVHVRDVIIGLGACTDSKVNRIRFRDNDFAAIADFGMAQAAVQAAKNKKIKVHVGNLFSADLFYTPDVEMFDVMEKYGILGVEMEAAGIYGVAAEFGAKALSICTVSDHIRSGEQTSSEERQTTFNEMIEIALESVLLGDND.

An a purine D-ribonucleoside-binding site is contributed by H4. Residues G20, R24, R43, and 87–90 (RVGS) each bind phosphate. Residues 179–181 (EME) and 203–204 (SD) each bind a purine D-ribonucleoside. D204 functions as the Proton donor in the catalytic mechanism.

This sequence belongs to the PNP/UDP phosphorylase family. In terms of assembly, homohexamer; trimer of homodimers.

The enzyme catalyses a purine D-ribonucleoside + phosphate = a purine nucleobase + alpha-D-ribose 1-phosphate. The catalysed reaction is a purine 2'-deoxy-D-ribonucleoside + phosphate = a purine nucleobase + 2-deoxy-alpha-D-ribose 1-phosphate. Its function is as follows. Catalyzes the reversible phosphorolytic breakdown of the N-glycosidic bond in the beta-(deoxy)ribonucleoside molecules, with the formation of the corresponding free purine bases and pentose-1-phosphate. In Actinobacillus succinogenes (strain ATCC 55618 / DSM 22257 / CCUG 43843 / 130Z), this protein is Purine nucleoside phosphorylase DeoD-type.